The primary structure comprises 130 residues: Fluoride-specific ion channel FluC (130 aa).

Transmembrane regions (helical) follow at residues 4–24 (MINV…RYFI), 35–55 (GFPI…GLLT), 68–88 (LNLF…TFSL), and 99–119 (AVFG…GVVL). Na(+) contacts are provided by Gly-78 and Thr-81.

Belongs to the fluoride channel Fluc/FEX (TC 1.A.43) family.

The protein resides in the cell membrane. The enzyme catalyses fluoride(in) = fluoride(out). Na(+) is not transported, but it plays an essential structural role and its presence is essential for fluoride channel function. Fluoride-specific ion channel. Important for reducing fluoride concentration in the cell, thus reducing its toxicity. In Ruminiclostridium cellulolyticum (strain ATCC 35319 / DSM 5812 / JCM 6584 / H10) (Clostridium cellulolyticum), this protein is Fluoride-specific ion channel FluC.